A 227-amino-acid polypeptide reads, in one-letter code: dTTP/UTP pyrophosphatase (227 aa).

The Proton acceptor role is filled by aspartate 98.

It belongs to the Maf family. YhdE subfamily. The cofactor is a divalent metal cation.

It is found in the cytoplasm. It carries out the reaction dTTP + H2O = dTMP + diphosphate + H(+). The enzyme catalyses UTP + H2O = UMP + diphosphate + H(+). Its function is as follows. Nucleoside triphosphate pyrophosphatase that hydrolyzes dTTP and UTP. May have a dual role in cell division arrest and in preventing the incorporation of modified nucleotides into cellular nucleic acids. The polypeptide is dTTP/UTP pyrophosphatase (Bartonella quintana (strain Toulouse) (Rochalimaea quintana)).